A 155-amino-acid chain; its full sequence is Small ribosomal subunit protein uS7c (155 aa).

The protein belongs to the universal ribosomal protein uS7 family. As to quaternary structure, part of the 30S ribosomal subunit.

It is found in the plastid. Its subcellular location is the chloroplast. Functionally, one of the primary rRNA binding proteins, it binds directly to 16S rRNA where it nucleates assembly of the head domain of the 30S subunit. The sequence is that of Small ribosomal subunit protein uS7c (rps7) from Pinus koraiensis (Korean pine).